A 500-amino-acid polypeptide reads, in one-letter code: UDP-N-acetylmuramoyl-L-alanyl-D-glutamate--2,6-diaminopimelate ligase (500 aa).

Ser-32 contacts UDP-N-acetyl-alpha-D-muramoyl-L-alanyl-D-glutamate. An ATP-binding site is contributed by 117-123 (GTNGKTT). Residues 159–160 (TT), Ser-186, Gln-192, and Arg-194 each bind UDP-N-acetyl-alpha-D-muramoyl-L-alanyl-D-glutamate. At Lys-226 the chain carries N6-carboxylysine. Meso-2,6-diaminopimelate contacts are provided by residues Arg-395, 419–422 (DNPR), Gly-470, and Glu-474. The short motif at 419–422 (DNPR) is the Meso-diaminopimelate recognition motif element.

Belongs to the MurCDEF family. MurE subfamily. Mg(2+) is required as a cofactor. In terms of processing, carboxylation is probably crucial for Mg(2+) binding and, consequently, for the gamma-phosphate positioning of ATP.

The protein resides in the cytoplasm. It catalyses the reaction UDP-N-acetyl-alpha-D-muramoyl-L-alanyl-D-glutamate + meso-2,6-diaminopimelate + ATP = UDP-N-acetyl-alpha-D-muramoyl-L-alanyl-gamma-D-glutamyl-meso-2,6-diaminopimelate + ADP + phosphate + H(+). It participates in cell wall biogenesis; peptidoglycan biosynthesis. Catalyzes the addition of meso-diaminopimelic acid to the nucleotide precursor UDP-N-acetylmuramoyl-L-alanyl-D-glutamate (UMAG) in the biosynthesis of bacterial cell-wall peptidoglycan. This chain is UDP-N-acetylmuramoyl-L-alanyl-D-glutamate--2,6-diaminopimelate ligase, found in Parasynechococcus marenigrum (strain WH8102).